A 477-amino-acid chain; its full sequence is Pentatricopeptide repeat-containing protein At4g14170 (477 aa).

PPR repeat units follow at residues 65-96 (NVVL…MPYR), 97-131 (NIFS…SCVR), 133-167 (DDFT…GFSS), 168-198 (SLFV…MPVR), 199-233 (DSVL…GFAL), 234-264 (DSVV…CIRR), 269-299 (GLNL…MSRR), 300-334 (DVIS…GIEP), 335-369 (NAVT…NIVP), and 370-400 (ELKH…MPVK). The interval 405–477 (VMGAVLSGCK…ISKVPGCSSI (73 aa)) is type E motif; degenerate.

The protein belongs to the PPR family. PCMP-E subfamily.

The protein is Pentatricopeptide repeat-containing protein At4g14170 (PCMP-E17) of Arabidopsis thaliana (Mouse-ear cress).